Here is a 117-residue protein sequence, read N- to C-terminus: UPF0102 protein Rsph17025_0472 (117 aa).

The protein belongs to the UPF0102 family.

This Cereibacter sphaeroides (strain ATCC 17025 / ATH 2.4.3) (Rhodobacter sphaeroides) protein is UPF0102 protein Rsph17025_0472.